The following is a 509-amino-acid chain: Maturase K (509 aa).

Belongs to the intron maturase 2 family. MatK subfamily.

It is found in the plastid. The protein resides in the chloroplast. Functionally, usually encoded in the trnK tRNA gene intron. Probably assists in splicing its own and other chloroplast group II introns. The sequence is that of Maturase K from Avicennia marina (Grey mangrove).